The chain runs to 145 residues: Hemoglobin fetal subunit beta (145 aa).

Residues 1–145 enclose the Globin domain; that stretch reads MLSAEEKAAV…VANALAHRYH (145 aa). The heme b site is built by His-62 and His-91.

This sequence belongs to the globin family. Heterotetramer of two alpha chains and two beta chains. Red blood cells.

Functionally, involved in oxygen transport from the lung to the various peripheral tissues. The polypeptide is Hemoglobin fetal subunit beta (Bos taurus (Bovine)).